The following is a 325-amino-acid chain: MCSNSNCYVPFFNWYWPFCGVLAIIFQTILLHLISHKSPATLDGLKIFLYNTSCVQIALITFAFLSQHRLLTNSISAAVLSLGPCSYVSPTTCFINYHVFMATSFGAGSAIAITVLFRFFVLVQNQVHTNQTYIMVLASYIAPLVVLIIPFTDKWDFESAQASTALEHPSYNLSIYYPYSGFSNAGSPQFLSATLLLSIGAYGIPIGCLILTRKVLILIRYHSHMSERTKKQAQTLIHGLIVQSMLPFISYIPSFSGYIYTQSTGRELLICEHLILVSSAFPALLDPFISFYFIVPYRQAIIEWVLPKRQQRITTVTSNSTSGFN.

8 helical membrane-spanning segments follow: residues 14-34 (WYWP…LHLI), 45-65 (LKIF…FAFL), 75-95 (ISAA…TCFI), 97-117 (YHVF…TVLF), 132-152 (TYIM…IPFT), 190-210 (FLSA…GCLI), 235-255 (TLIH…IPSF), and 275-295 (ILVS…YFIV).

It belongs to the nematode receptor-like protein srd family.

It localises to the membrane. This chain is Serpentine receptor class delta-59 (srd-59), found in Caenorhabditis elegans.